The following is a 564-amino-acid chain: uncharacterized protein (564 aa).

An N-terminal signal peptide occupies residues 1–21; it reads MRRIGAITALSLPVLLSLLYS. Residue Cys-22 is the site of N-palmitoyl cysteine attachment. Cys-22 is lipidated: S-diacylglycerol cysteine.

It is found in the cell membrane. This is an uncharacterized protein from Aquifex aeolicus (strain VF5).